The chain runs to 479 residues: Zinc metalloproteinase/disintegrin (479 aa).

Positions 1–20 are cleaved as a signal peptide; that stretch reads MIQVLLVTICLAAFPYQGSS. Residues 21 to 187 constitute a propeptide that is removed on maturation; the sequence is IILESGKVND…PIKKASQLIV (167 aa). The region spanning 193–390 is the Peptidase M12B domain; sequence RYMEIVIVVD…ENPPCILNKP (198 aa). Ca(2+) is bound by residues glutamate 196 and aspartate 280. Intrachain disulfides connect cysteine 304-cysteine 385, cysteine 344-cysteine 369, and cysteine 346-cysteine 352. A Zn(2+)-binding site is contributed by histidine 329. Glutamate 330 is an active-site residue. Zn(2+) is bound by residues histidine 333 and histidine 339. The Ca(2+) site is built by cysteine 385 and asparagine 388. Positions 390–414 are excised as a propeptide; the sequence is PLRTDTVSTPVSGNELLEAGKDYDR. The 82-residue stretch at 398-479 folds into the Disintegrin domain; sequence TPVSGNELLE…ADCPRNPYHA (82 aa). Disulfide bonds link cysteine 435–cysteine 441, cysteine 440–cysteine 465, and cysteine 453–cysteine 472. The Cell attachment site signature appears at 457–459; that stretch reads RGD.

The protein belongs to the venom metalloproteinase (M12B) family. P-II subfamily. P-IIa sub-subfamily. Monomer. It depends on Zn(2+) as a cofactor. As to expression, expressed by the venom gland.

It localises to the secreted. In terms of biological role, snake venom metalloproteinase that impairs hemostasis in the envenomed animal. Inhibits platelet aggregation induced by ADP, thrombin, platelet-activating factor and collagen. Acts by inhibiting fibrinogen interaction with platelet receptors GPIIb/GPIIIa (ITGA2B/ITGB3). This is Zinc metalloproteinase/disintegrin from Deinagkistrodon acutus (Hundred-pace snake).